A 382-amino-acid chain; its full sequence is Serine/threonine-protein phosphatase 2A activator 2 (382 aa).

The segment at 363-382 is disordered; the sequence is SHKGVPTLGNRPGIKPIPFD.

Belongs to the PTPA-type PPIase family.

It is found in the cytoplasm. It catalyses the reaction [protein]-peptidylproline (omega=180) = [protein]-peptidylproline (omega=0). Its function is as follows. PPIases accelerate the folding of proteins. It catalyzes the cis-trans isomerization of proline imidic peptide bonds in oligopeptides. Acts as a regulatory subunit for PP2A-like phosphatases modulating their activity or substrate specificity, probably by inducing a conformational change in the catalytic subunit, a direct target of the PPIase. Can reactivate inactive phosphatase PP2A-phosphatase methylesterase complexes (PP2Ai) in presence of ATP and Mg(2+) by dissociating the inactive form from the complex. The sequence is that of Serine/threonine-protein phosphatase 2A activator 2 (RRD2) from Cryptococcus neoformans var. neoformans serotype D (strain B-3501A) (Filobasidiella neoformans).